Reading from the N-terminus, the 338-residue chain is N-acetyl-gamma-glutamyl-phosphate reductase (338 aa).

Cysteine 148 is a catalytic residue.

This sequence belongs to the NAGSA dehydrogenase family. Type 1 subfamily.

The protein resides in the cytoplasm. The catalysed reaction is N-acetyl-L-glutamate 5-semialdehyde + phosphate + NADP(+) = N-acetyl-L-glutamyl 5-phosphate + NADPH + H(+). It functions in the pathway amino-acid biosynthesis; L-arginine biosynthesis; N(2)-acetyl-L-ornithine from L-glutamate: step 3/4. Catalyzes the NADPH-dependent reduction of N-acetyl-5-glutamyl phosphate to yield N-acetyl-L-glutamate 5-semialdehyde. The polypeptide is N-acetyl-gamma-glutamyl-phosphate reductase (Leptospira interrogans serogroup Icterohaemorrhagiae serovar Lai (strain 56601)).